Consider the following 283-residue polypeptide: Bifunctional protein FolD (283 aa).

NADP(+) contacts are provided by residues 166 to 168 (GAS) and isoleucine 232.

This sequence belongs to the tetrahydrofolate dehydrogenase/cyclohydrolase family. In terms of assembly, homodimer.

The catalysed reaction is (6R)-5,10-methylene-5,6,7,8-tetrahydrofolate + NADP(+) = (6R)-5,10-methenyltetrahydrofolate + NADPH. The enzyme catalyses (6R)-5,10-methenyltetrahydrofolate + H2O = (6R)-10-formyltetrahydrofolate + H(+). It participates in one-carbon metabolism; tetrahydrofolate interconversion. Catalyzes the oxidation of 5,10-methylenetetrahydrofolate to 5,10-methenyltetrahydrofolate and then the hydrolysis of 5,10-methenyltetrahydrofolate to 10-formyltetrahydrofolate. The protein is Bifunctional protein FolD of Mannheimia succiniciproducens (strain KCTC 0769BP / MBEL55E).